A 196-amino-acid chain; its full sequence is Putative NADH dehydrogenase/NAD(P)H nitroreductase Smlt0482 (196 aa).

The protein belongs to the nitroreductase family. HadB/RutE subfamily. FMN is required as a cofactor.

This chain is Putative NADH dehydrogenase/NAD(P)H nitroreductase Smlt0482, found in Stenotrophomonas maltophilia (strain K279a).